The sequence spans 101 residues: UPF0751 protein DSY3086 (101 aa).

Belongs to the UPF0751 family.

This chain is UPF0751 protein DSY3086, found in Desulfitobacterium hafniense (strain Y51).